Reading from the N-terminus, the 302-residue chain is Cyclin-dependent kinase 1-B (302 aa).

The region spanning 4–287 is the Protein kinase domain; the sequence is YTKIEKIGEG…ARKAMLHPYF (284 aa). ATP is bound by residues 10–18 and Lys-33; that span reads IGEGTYGVV. A Phosphothreonine modification is found at Thr-14. Tyr-15 carries the phosphotyrosine; by wee1 and wee2 modification. Asp-128 (proton acceptor) is an active-site residue. Thr-161 is subject to Phosphothreonine; by cak. Ser-277 carries the post-translational modification Phosphoserine.

Belongs to the protein kinase superfamily. CMGC Ser/Thr protein kinase family. CDC2/CDKX subfamily. As to quaternary structure, forms a stable but non-covalent complex with a regulatory subunit and with a cyclin. Interacts with spdya. Post-translationally, phosphorylation at Tyr-15 by wee1 and wee2 inhibits the protein kinase activity and acts negative regulator of entry into mitosis (G2 to M transition).

The protein resides in the nucleus. The enzyme catalyses L-seryl-[protein] + ATP = O-phospho-L-seryl-[protein] + ADP + H(+). It catalyses the reaction L-threonyl-[protein] + ATP = O-phospho-L-threonyl-[protein] + ADP + H(+). It carries out the reaction [DNA-directed RNA polymerase] + ATP = phospho-[DNA-directed RNA polymerase] + ADP + H(+). Phosphorylation at Thr-14 or Tyr-15 inactivates the enzyme, while phosphorylation at Thr-161 activates it. Functionally, plays a key role in the control of the eukaryotic cell cycle by modulating the centrosome cycle as well as mitotic onset; promotes G2-M transition via association with multiple interphase cyclins. During G2 and early mitosis, CDC25A/B/C-mediated dephosphorylation activates CDK1/cyclin complexes which phosphorylate several substrates that trigger at least centrosome separation, Golgi dynamics, nuclear envelope breakdown and chromosome condensation. Once chromosomes are condensed and aligned at the metaphase plate, CDK1 activity is switched off by WEE1- and PKMYT1-mediated phosphorylation to allow sister chromatid separation, chromosome decondensation, reformation of the nuclear envelope and cytokinesis. Catalyzes lamin (LMNA, LMNB1 and LMNB2) phosphorylation at the onset of mitosis, promoting nuclear envelope breakdown. The protein is Cyclin-dependent kinase 1-B (cdk1-b) of Xenopus laevis (African clawed frog).